The primary structure comprises 354 residues: Glycerol-3-phosphate dehydrogenase [NAD(+)], glycosomal (354 aa).

NAD(+)-binding positions include 15–20 (GSGAFG), Phe-90, Lys-118, and Ala-150. Lys-118 lines the substrate pocket. The active-site Proton acceptor is the Lys-203. NAD(+) contacts are provided by Arg-267 and Glu-293. 267–268 (RN) is a substrate binding site. Residues 352–354 (SKM) carry the Microbody targeting signal motif.

Belongs to the NAD-dependent glycerol-3-phosphate dehydrogenase family.

The protein resides in the glycosome. It carries out the reaction sn-glycerol 3-phosphate + NAD(+) = dihydroxyacetone phosphate + NADH + H(+). The sequence is that of Glycerol-3-phosphate dehydrogenase [NAD(+)], glycosomal (GPD) from Trypanosoma brucei rhodesiense.